The primary structure comprises 153 residues: NAD(P)H-quinone oxidoreductase subunit N (153 aa).

This sequence belongs to the complex I NdhN subunit family. NDH-1 can be composed of about 15 different subunits; different subcomplexes with different compositions have been identified which probably have different functions.

It localises to the cellular thylakoid membrane. It catalyses the reaction a plastoquinone + NADH + (n+1) H(+)(in) = a plastoquinol + NAD(+) + n H(+)(out). It carries out the reaction a plastoquinone + NADPH + (n+1) H(+)(in) = a plastoquinol + NADP(+) + n H(+)(out). Its function is as follows. NDH-1 shuttles electrons from an unknown electron donor, via FMN and iron-sulfur (Fe-S) centers, to quinones in the respiratory and/or the photosynthetic chain. The immediate electron acceptor for the enzyme in this species is believed to be plastoquinone. Couples the redox reaction to proton translocation, and thus conserves the redox energy in a proton gradient. Cyanobacterial NDH-1 also plays a role in inorganic carbon-concentration. This is NAD(P)H-quinone oxidoreductase subunit N from Prochlorococcus marinus (strain MIT 9211).